We begin with the raw amino-acid sequence, 282 residues long: 4-diphosphocytidyl-2-C-methyl-D-erythritol kinase (282 aa).

The active site involves Lys9. Residue 98-108 participates in ATP binding; sequence PMGGGLGGGSS. Asp140 is a catalytic residue.

Belongs to the GHMP kinase family. IspE subfamily. As to quaternary structure, homodimer.

The enzyme catalyses 4-CDP-2-C-methyl-D-erythritol + ATP = 4-CDP-2-C-methyl-D-erythritol 2-phosphate + ADP + H(+). Its pathway is isoprenoid biosynthesis; isopentenyl diphosphate biosynthesis via DXP pathway; isopentenyl diphosphate from 1-deoxy-D-xylulose 5-phosphate: step 3/6. Its function is as follows. Catalyzes the phosphorylation of the position 2 hydroxy group of 4-diphosphocytidyl-2C-methyl-D-erythritol. In Klebsiella pneumoniae (strain 342), this protein is 4-diphosphocytidyl-2-C-methyl-D-erythritol kinase.